The sequence spans 409 residues: Histidinol dehydrogenase homolog (409 aa).

This sequence belongs to the histidinol dehydrogenase family.

The protein is Histidinol dehydrogenase homolog of Synechocystis sp. (strain ATCC 27184 / PCC 6803 / Kazusa).